We begin with the raw amino-acid sequence, 508 residues long: MDTMITTPLILILITCGANSQTVKPDTASESDQPTWSNPLFTYPEGCTLDKLSKVNASQLRCPRIFDDENRGLIAYPTSIRSLSVGNDLGEIHTQGNHIHKVLYRTICSTGFFGGQTIEKALVEMKLSTKEAGAYDTTTAAALYFPAPRCQWYTDNVQNDLIFYYTTQKSVLRDPYTRDFLDSDFIGGKCTKSPCQTHWSNVVWMGDAGIPACDSSQEIKAHLFVDKISNRVVKATSYGHHPWGLHRACMIEFCGKQWIRTDLGDLISVEYNSGAEILSFPKCEDKTMGMRGNLDDFAYLDDLVKASESREECLEAHAEIISTNSVTPYLLSKFRSPHPGINDVYAMHKGSIYHGMCMTVAVDEVSKDRTTYRAHRATSFTKWERPFGDEWEGFHGLHGNNTTIIPDLEKYVAQYKTSMMEPMSIKSVPHPSILAFYNETDLSGISIRKLDSFDLQSLHWSFWPTISALGGIPLVLLLAVAACCCWSGRPPTPSAPQSIPMYHLANRS.

The N-terminal stretch at 1-20 is a signal peptide; sequence MDTMITTPLILILITCGANS. At 21–461 the chain is on the virion surface side; the sequence is QTVKPDTASE…SFDLQSLHWS (441 aa). Asn56, Asn400, Asn401, and Asn438 each carry an N-linked (GlcNAc...) asparagine; by host glycan. The helical transmembrane segment at 462–482 threads the bilayer; it reads FWPTISALGGIPLVLLLAVAA. Residues 483–508 are Intravirion-facing; it reads CCCWSGRPPTPSAPQSIPMYHLANRS.

This sequence belongs to the novirhabdovirus glycoprotein family. As to quaternary structure, homotrimer.

It is found in the virion membrane. Its function is as follows. Binds to specific receptor at cellular surface, bringing about the attachment of the virus particle to the cell. Plays a major role in the determination of host range restriction and virulence. Class I viral fusion protein. Responsible for penetration of the viral nucleocapsid into the cell cytoplasm by mediating the fusion of the membrane of the endocytosed virus particle with the endosomal membrane. Low pH in endosomes induce an irreversible conformational change in G, releasing a fusion hydrophobic peptide. This is Glycoprotein (G) from Salmo (IHNV).